The following is a 495-amino-acid chain: Adenosylhomocysteinase (495 aa).

Residues threonine 71, aspartate 156, and glutamate 218 each coordinate substrate. 219–221 (TTT) contacts NAD(+). Lysine 248 and aspartate 252 together coordinate substrate. NAD(+) is bound by residues asparagine 253, 282–287 (GYGDVG), glutamate 305, asparagine 340, 361–363 (IGH), and asparagine 409.

It belongs to the adenosylhomocysteinase family. Requires NAD(+) as cofactor.

It localises to the cytoplasm. It carries out the reaction S-adenosyl-L-homocysteine + H2O = L-homocysteine + adenosine. Its pathway is amino-acid biosynthesis; L-homocysteine biosynthesis; L-homocysteine from S-adenosyl-L-homocysteine: step 1/1. May play a key role in the regulation of the intracellular concentration of adenosylhomocysteine. The chain is Adenosylhomocysteinase from Mycobacterium bovis (strain ATCC BAA-935 / AF2122/97).